The sequence spans 297 residues: 33 kDa chaperonin (297 aa).

2 disulfide bridges follow: C239-C241 and C272-C275.

Belongs to the HSP33 family. Under oxidizing conditions two disulfide bonds are formed involving the reactive cysteines. Under reducing conditions zinc is bound to the reactive cysteines and the protein is inactive.

The protein localises to the cytoplasm. In terms of biological role, redox regulated molecular chaperone. Protects both thermally unfolding and oxidatively damaged proteins from irreversible aggregation. Plays an important role in the bacterial defense system toward oxidative stress. This Clostridium acetobutylicum (strain ATCC 824 / DSM 792 / JCM 1419 / IAM 19013 / LMG 5710 / NBRC 13948 / NRRL B-527 / VKM B-1787 / 2291 / W) protein is 33 kDa chaperonin.